A 183-amino-acid polypeptide reads, in one-letter code: Putative 3-methyladenine DNA glycosylase (183 aa).

This sequence belongs to the DNA glycosylase MPG family.

The chain is Putative 3-methyladenine DNA glycosylase from Rickettsia africae (strain ESF-5).